The chain runs to 133 residues: Ribosome-binding factor A (133 aa).

Belongs to the RbfA family. In terms of assembly, monomer. Binds 30S ribosomal subunits, but not 50S ribosomal subunits or 70S ribosomes.

The protein localises to the cytoplasm. In terms of biological role, one of several proteins that assist in the late maturation steps of the functional core of the 30S ribosomal subunit. Associates with free 30S ribosomal subunits (but not with 30S subunits that are part of 70S ribosomes or polysomes). Required for efficient processing of 16S rRNA. May interact with the 5'-terminal helix region of 16S rRNA. This is Ribosome-binding factor A from Salmonella heidelberg (strain SL476).